The sequence spans 295 residues: uncharacterized protein (295 aa).

A compositionally biased stretch (basic residues) spans 1-13 (MRHSVARPTRLPR). 2 disordered regions span residues 1–111 (MRHS…AGLS) and 183–295 (TSAF…PRDS). The segment covering 57 to 67 (AGPSAGAAARP) has biased composition (low complexity). Pro residues predominate over residues 68–77 (AAPPPQPREP). 2 stretches are compositionally biased toward basic and acidic residues: residues 245–257 (LRPKGARADDRRP) and 280–295 (GEPHKAGEVGNHPRDS).

This is an uncharacterized protein from Homo sapiens (Human).